A 310-amino-acid polypeptide reads, in one-letter code: Phosphoribosylaminoimidazole-succinocarboxamide synthase (310 aa).

The protein belongs to the SAICAR synthetase family.

It carries out the reaction 5-amino-1-(5-phospho-D-ribosyl)imidazole-4-carboxylate + L-aspartate + ATP = (2S)-2-[5-amino-1-(5-phospho-beta-D-ribosyl)imidazole-4-carboxamido]succinate + ADP + phosphate + 2 H(+). Its pathway is purine metabolism; IMP biosynthesis via de novo pathway; 5-amino-1-(5-phospho-D-ribosyl)imidazole-4-carboxamide from 5-amino-1-(5-phospho-D-ribosyl)imidazole-4-carboxylate: step 1/2. This chain is Phosphoribosylaminoimidazole-succinocarboxamide synthase, found in Cytophaga hutchinsonii (strain ATCC 33406 / DSM 1761 / CIP 103989 / NBRC 15051 / NCIMB 9469 / D465).